Consider the following 630-residue polypeptide: Chaperone protein DnaK (630 aa).

T198 bears the Phosphothreonine; by autocatalysis mark. The disordered stretch occupies residues 604-630; that stretch reads AAAAPGEEAPKDDDVVDAEFSEVDDKK. A compositionally biased stretch (acidic residues) spans 617-630; it reads DVVDAEFSEVDDKK.

This sequence belongs to the heat shock protein 70 family.

In terms of biological role, acts as a chaperone. This Rhizorhabdus wittichii (strain DSM 6014 / CCUG 31198 / JCM 15750 / NBRC 105917 / EY 4224 / RW1) (Sphingomonas wittichii) protein is Chaperone protein DnaK.